The following is a 129-amino-acid chain: Phosphoribosyl-AMP cyclohydrolase (129 aa).

Residue aspartate 85 coordinates Mg(2+). Position 86 (cysteine 86) interacts with Zn(2+). Mg(2+) contacts are provided by aspartate 87 and aspartate 89. Zn(2+) is bound by residues cysteine 102 and cysteine 109.

This sequence belongs to the PRA-CH family. As to quaternary structure, homodimer. The cofactor is Mg(2+). Requires Zn(2+) as cofactor.

The protein resides in the cytoplasm. It catalyses the reaction 1-(5-phospho-beta-D-ribosyl)-5'-AMP + H2O = 1-(5-phospho-beta-D-ribosyl)-5-[(5-phospho-beta-D-ribosylamino)methylideneamino]imidazole-4-carboxamide. It functions in the pathway amino-acid biosynthesis; L-histidine biosynthesis; L-histidine from 5-phospho-alpha-D-ribose 1-diphosphate: step 3/9. Its function is as follows. Catalyzes the hydrolysis of the adenine ring of phosphoribosyl-AMP. In Methanococcus maripaludis (strain C5 / ATCC BAA-1333), this protein is Phosphoribosyl-AMP cyclohydrolase.